The primary structure comprises 629 residues: tRNA uridine 5-carboxymethylaminomethyl modification enzyme MnmG (629 aa).

Residues 13-18 (GGGHAG), Val125, and Ser180 contribute to the FAD site. 273–287 (GPRYCPSIEDKIHRF) is a binding site for NAD(+). Position 370 (Gln370) interacts with FAD.

It belongs to the MnmG family. Homodimer. Heterotetramer of two MnmE and two MnmG subunits. FAD is required as a cofactor.

Its subcellular location is the cytoplasm. Its function is as follows. NAD-binding protein involved in the addition of a carboxymethylaminomethyl (cmnm) group at the wobble position (U34) of certain tRNAs, forming tRNA-cmnm(5)s(2)U34. This is tRNA uridine 5-carboxymethylaminomethyl modification enzyme MnmG from Shewanella sp. (strain MR-7).